Consider the following 114-residue polypeptide: Transcription factor S1 (114 aa).

The tract at residues 1 to 43 is N-ZR; it reads MIVVKFCPKCNSMMVPKKSNGKNVYRCTKCGYEKEVPETTIVV. Zn(2+) is bound by residues cysteine 7, cysteine 10, cysteine 27, cysteine 30, cysteine 75, and cysteine 78. Residues 63-114 form a C-ZR region; that stretch reads MPSGAQKIKGVLCPSCKNDEAYFWILQTRRADEPPTRFYKCTKCGKVWREYE. Residues 71-111 form a TFIIS-type zinc finger; sequence KGVLCPSCKNDEAYFWILQTRRADEPPTRFYKCTKCGKVWR. Residues aspartate 94 and glutamate 95 contribute to the active site. The Zn(2+) site is built by cysteine 103 and cysteine 106.

It belongs to the archaeal RpoM/eukaryotic RPA12/RPB9/RPC11 RNA polymerase family. In terms of assembly, interacts with RNA polymerase; probably competes with TFS4 for the same binding site. It depends on Zn(2+) as a cofactor.

Induces RNA cleavage activity in the RNA polymerase. Induces rapid cleavage of a stalled transcription elongation complex with a 2-nucleotide reduction at the 3' end of the nascent RNA. Truncated RNA is able to resume elongation. During transcription elongation it enhances processivity. Involved in transcriptional proofreading and fidelity. Misincorporation of nucleotides during elongation of transcription leads to arrested elongation complexes which are rescued by TFS-promoted removal of a dinucleotide from the 3'-end. TFS1 is able to induce a cleavage resynthesis cycle in stalled elongation complexes (resulting from the next missing nucleotide or a reduced incorporation rate of a wrong nucleotide) preventing misincorporation and enabling proofreading in a post-incorporation manner. Pausing of elongation complexes is the main determinant of TFS-induced RNA cleavage. In Saccharolobus solfataricus (strain ATCC 35092 / DSM 1617 / JCM 11322 / P2) (Sulfolobus solfataricus), this protein is Transcription factor S1.